We begin with the raw amino-acid sequence, 1483 residues long: Mediator of RNA polymerase II transcription subunit 26 (1483 aa).

Residues 8 to 85 (ELTTHLSQAL…KKWREMVGIQ (78 aa)) enclose the TFIIS N-terminal domain. Serine 204, serine 258, and serine 421 each carry phosphoserine. Disordered stretches follow at residues 227 to 278 (SDSD…GQVA), 414 to 438 (HEYL…SKGV), 480 to 518 (VSMQ…SMNS), 541 to 575 (TDSD…SIQS), and 989 to 1041 (DKSS…MKRR). The span at 426 to 435 (PKRRGRKKGS) shows a compositional bias: basic residues. The span at 480–495 (VSMQSSASNLSNSSTN) shows a compositional bias: low complexity. The segment covering 496 to 518 (RDLPSHTTFPRQTSSCSDTSMNS) has biased composition (polar residues). A Phosphothreonine modification is found at threonine 541. The span at 550–564 (PSHDSNKSQEIKECT) shows a compositional bias: basic and acidic residues. Serine 551 is subject to Phosphoserine. Composition is skewed to polar residues over residues 565-575 (SLDSNSNSIQS) and 989-999 (DKSSNTGCQGN). Positions 1000-1011 (SPYSSSSSSSYS) are enriched in low complexity. The span at 1020–1033 (ITKNLQNKNIQLNS) shows a compositional bias: polar residues. Serine 1177 bears the Phosphoserine mark. Position 1179 is a phosphothreonine (threonine 1179).

Belongs to the Mediator complex subunit 26 family. Component of the Mediator complex. Interacts with MED6 and MED17.

The protein resides in the nucleus. In terms of biological role, component of the Mediator complex, a coactivator involved in the regulated transcription of nearly all RNA polymerase II-dependent genes. Mediator functions as a bridge to convey information from gene-specific regulatory proteins to the basal RNA polymerase II transcription machinery. Mediator is recruited to promoters by direct interactions with regulatory proteins and serves as a scaffold for the assembly of a functional preinitiation complex with RNA polymerase II and the general transcription factors. Required for activated transcription of the MtnA gene. In Drosophila melanogaster (Fruit fly), this protein is Mediator of RNA polymerase II transcription subunit 26 (MED26).